The following is a 168-amino-acid chain: Peptide deformylase (168 aa).

Positions 92 and 134 each coordinate Fe cation. Glu-135 is an active-site residue. His-138 contacts Fe cation.

It belongs to the polypeptide deformylase family. Fe(2+) serves as cofactor.

It catalyses the reaction N-terminal N-formyl-L-methionyl-[peptide] + H2O = N-terminal L-methionyl-[peptide] + formate. Removes the formyl group from the N-terminal Met of newly synthesized proteins. Requires at least a dipeptide for an efficient rate of reaction. N-terminal L-methionine is a prerequisite for activity but the enzyme has broad specificity at other positions. This Teredinibacter turnerae (strain ATCC 39867 / T7901) protein is Peptide deformylase.